The chain runs to 811 residues: DEAD-box ATP-dependent RNA helicase 48 (811 aa).

Disordered regions lie at residues 1–32 (MGGG…ERGL) and 93–138 (DDGP…EPRL). The segment covering 15-29 (WQHKRMHEKLARHKE) has biased composition (basic residues). Composition is skewed to basic and acidic residues over residues 95 to 104 (GPIHRADRPR) and 117 to 138 (GDRR…EPRL). A coiled-coil region spans residues 286–333 (RNCDMKKERRALKSYEEENNDLAGSFRELREEIKNREVLGAERRRYES). The Q motif signature appears at 342-370 (KRFEECGISPLTVKALTDAGYVQTTVVQE). Residues 373–556 (LPMCLEGKDV…QLVLKRDHVF (184 aa)) enclose the Helicase ATP-binding domain. Residue 386–393 (AKTGTGKS) participates in ATP binding. The DEAD box motif lies at 504–507 (DEAD). In terms of domain architecture, Helicase C-terminal spans 570-740 (KVEQLYLVMP…EMKRKVDGSI (171 aa)).

This sequence belongs to the DEAD box helicase family.

It carries out the reaction ATP + H2O = ADP + phosphate + H(+). This is DEAD-box ATP-dependent RNA helicase 48 from Oryza sativa subsp. japonica (Rice).